We begin with the raw amino-acid sequence, 251 residues long: Probable transcriptional regulatory protein TGRD_462 (251 aa).

The protein belongs to the TACO1 family.

It localises to the cytoplasm. The chain is Probable transcriptional regulatory protein TGRD_462 from Endomicrobium trichonymphae.